A 492-amino-acid chain; its full sequence is Transcription factor IIIB 60 kDa subunit (492 aa).

The segment at 1-30 (MGCPNCGSTTFESDTASGNTYCTQCGVVVE) adopts a TFIIB-type zinc-finger fold. Residues cysteine 3, cysteine 6, cysteine 22, and cysteine 25 each contribute to the Zn(2+) site. The tract at residues 440-468 (QPRKRRRYRPRDSTSDGIADTAAESAKEM) is disordered.

It belongs to the TFIIB family. In terms of assembly, TFIIIB comprises the TATA-binding protein (TBP), the B-related factor (BRF) and a third subunit (Potential). Interacts with maf1.

The protein resides in the nucleus. General activator of RNA polymerase III transcription. This Schizosaccharomyces pombe (strain 972 / ATCC 24843) (Fission yeast) protein is Transcription factor IIIB 60 kDa subunit (brf1).